Consider the following 429-residue polypeptide: UDP-N-acetylglucosamine 1-carboxyvinyltransferase (429 aa).

Lysine 22–asparagine 23 provides a ligand contact to phosphoenolpyruvate. UDP-N-acetyl-alpha-D-glucosamine is bound at residue arginine 102. Cysteine 126 functions as the Proton donor in the catalytic mechanism. The residue at position 126 (cysteine 126) is a 2-(S-cysteinyl)pyruvic acid O-phosphothioketal. Residues arginine 131–leucine 135, aspartate 316, and isoleucine 338 contribute to the UDP-N-acetyl-alpha-D-glucosamine site.

Belongs to the EPSP synthase family. MurA subfamily.

The protein resides in the cytoplasm. It catalyses the reaction phosphoenolpyruvate + UDP-N-acetyl-alpha-D-glucosamine = UDP-N-acetyl-3-O-(1-carboxyvinyl)-alpha-D-glucosamine + phosphate. It functions in the pathway cell wall biogenesis; peptidoglycan biosynthesis. In terms of biological role, cell wall formation. Adds enolpyruvyl to UDP-N-acetylglucosamine. The sequence is that of UDP-N-acetylglucosamine 1-carboxyvinyltransferase from Rhodopseudomonas palustris (strain TIE-1).